Consider the following 361-residue polypeptide: Peptide chain release factor 1 (361 aa).

Q235 bears the N5-methylglutamine mark.

It belongs to the prokaryotic/mitochondrial release factor family. Post-translationally, methylated by PrmC. Methylation increases the termination efficiency of RF1.

Its subcellular location is the cytoplasm. Its function is as follows. Peptide chain release factor 1 directs the termination of translation in response to the peptide chain termination codons UAG and UAA. The chain is Peptide chain release factor 1 from Azoarcus sp. (strain BH72).